The following is a 585-amino-acid chain: Amyloid protein-binding protein 2 (585 aa).

TPR repeat units follow at residues 50-83 (QGRLCQLGSEFCELEVFAKVLRALDKRHLLHHCF), 120-153 (IQVGFVLGGFLSDAGWYSDAEKVFLSCLQLCTLH), 206-239 (AALYGELCALLFAKSHYDEAYKWCVEAMKEITSG), 288-321 (SDTLLDYGFYLLNVDNICQSVAIYQAALDIRQSV), 333-367 (HEDLAYSSYVHQYSSGKFDNALFHAERAIGIITHI), 429-462 (AKHYGNLGRLYQSMRKFKEAEEMHIKAIQIKEQL), 471-505 (ALSVGHLASLYNYDMNQYENAEKLYLRSIAIGKKL), and 514-547 (EYDYRGLIKLYNSTGNYEKVFEYHNVLSNWNRLR).

As to quaternary structure, component of a CRL2 E3 ubiquitin-protein ligase complex, also named ECS (Elongin BC-CUL2/5-SOCS-box protein) complex, composed of CUL2, Elongin BC (ELOB and ELOC), RBX1 and substrate-specific adapter APPBP2. Interacts with APP; APP interaction inhibits the E3 ubiquitin-protein ligase activity of the CRL2(APPBP2) complex. In terms of processing, rapidly degraded by the proteasome upon overexpression of a C-terminal fragment of APP.

Its subcellular location is the nucleus. The protein localises to the cytoplasm. It is found in the cytoskeleton. The protein resides in the membrane. The protein operates within protein modification; protein ubiquitination. Its activity is regulated as follows. E3 ubiquitin-protein ligase activity of the CRL2(APPBP2) complex is inhibited by APP. Substrate-recognition component of a Cul2-RING (CRL2) E3 ubiquitin-protein ligase complex of the DesCEND (destruction via C-end degrons) pathway, which recognizes a C-degron located at the extreme C terminus of target proteins, leading to their ubiquitination and degradation. The C-degron recognized by the DesCEND pathway is usually a motif of less than ten residues and can be present in full-length proteins, truncated proteins or proteolytically cleaved forms. The CRL2(APPBP2) complex specifically recognizes proteins with a -Arg-Xaa-Xaa-Gly degron at the C-terminus, leading to their ubiquitination and degradation. The CRL2(APPBP2) complex mediates ubiquitination and degradation of truncated SELENOV selenoproteins produced by failed UGA/Sec decoding, which end with a -Arg-Xaa-Xaa-Gly degron. May play a role in intracellular protein transport: may be involved in the translocation of APP along microtubules toward the cell surface. This is Amyloid protein-binding protein 2 from Rattus norvegicus (Rat).